Consider the following 126-residue polypeptide: Holo-[acyl-carrier-protein] synthase (126 aa).

Positions 9 and 58 each coordinate Mg(2+).

Belongs to the P-Pant transferase superfamily. AcpS family. Mg(2+) is required as a cofactor.

The protein resides in the cytoplasm. The catalysed reaction is apo-[ACP] + CoA = holo-[ACP] + adenosine 3',5'-bisphosphate + H(+). In terms of biological role, transfers the 4'-phosphopantetheine moiety from coenzyme A to a Ser of acyl-carrier-protein. In Hamiltonella defensa subsp. Acyrthosiphon pisum (strain 5AT), this protein is Holo-[acyl-carrier-protein] synthase.